A 146-amino-acid polypeptide reads, in one-letter code: Hemoglobin subunit beta (146 aa).

Val1 is modified (N-acetylvaline). Residues 2 to 146 (HLSDGEKNAI…VANALAHKYH (145 aa)) form the Globin domain. A Phosphoserine modification is found at Ser44. Position 59 is an N6-acetyllysine (Lys59). His63 contributes to the heme b binding site. The residue at position 82 (Lys82) is an N6-acetyllysine. His92 contacts heme b. The residue at position 93 (Cys93) is an S-nitrosocysteine. Lys144 is modified (N6-acetyllysine).

This sequence belongs to the globin family. Heterotetramer of two alpha chains and two beta chains. Red blood cells.

Involved in oxygen transport from the lung to the various peripheral tissues. In Spermophilus citellus (European ground squirrel), this protein is Hemoglobin subunit beta (HBB).